Consider the following 109-residue polypeptide: Putative RNase MJ1380 (109 aa).

Active-site residues include Arg-76 and His-81. Residues 76–83 (RNILIHKY) carry the RX(4)HXY motif motif. Residue Tyr-83 is modified to O-di-AMP-tyrosine.

It belongs to the HepT RNase toxin family. In terms of assembly, homodimer, probably forms a complex with cognate antitoxin MJ1379. Post-translationally, modified by cognate antitoxin MJ1379; probably at least 2 successive AMPylation events occur on Tyr-83.

In terms of biological role, probable toxic component of a putative type VII toxin-antitoxin (TA) system, probably an RNase. Probably neutralized by cognate antitoxin MJ1379. Neutralization may be due to AMPylation by antitoxin MJ1379. This is Putative RNase MJ1380 from Methanocaldococcus jannaschii (strain ATCC 43067 / DSM 2661 / JAL-1 / JCM 10045 / NBRC 100440) (Methanococcus jannaschii).